The chain runs to 236 residues: 3-deoxy-D-manno-octulosonic acid kinase (236 aa).

The active site involves Asp-166.

It belongs to the protein kinase superfamily. KdkA/RfaP family.

The protein resides in the cell inner membrane. The enzyme catalyses an alpha-Kdo-(2-&gt;6)-lipid IVA + ATP = a 4-O-phospho-alpha-Kdo-(2-&gt;6)-lipid IVA + ADP + H(+). It participates in bacterial outer membrane biogenesis; LPS core biosynthesis. Catalyzes the ATP-dependent phosphorylation of the 3-deoxy-D-manno-octulosonic acid (Kdo) residue in Kdo-lipid IV(A) at the 4-OH position. The sequence is that of 3-deoxy-D-manno-octulosonic acid kinase from Photobacterium profundum (strain SS9).